The sequence spans 249 residues: Protein TIFY 10B (249 aa).

One can recognise a Tify domain in the interval 113-148 (PESQSAPLTIFYGGRVMVFDDFSAEKAKEVIDLANK). The Jas motif lies at 204–229 (PIARRASLHRFLEKRKDRITSKAPYQ). The Nuclear localization signal signature appears at 206–213 (ARRASLHR). The segment at 225 to 249 (KAPYQIDGSAEASSKPTNPAWLSSR) is disordered. Residues 235–249 (EASSKPTNPAWLSSR) show a composition bias toward polar residues.

It belongs to the TIFY/JAZ family. Homo- and heterodimer. Interacts with COI1, MYC2, MYC3, MYC4, AFPH2/NINJA, TIFY10A/JAZ1, TIFY6B/JAZ3, TIFY11A/JAZ5, TIFY11B/JAZ6, TIFY5A/JAZ8, TIFY7/JAZ9, TIFY9/JAZ10, TIFY3A/JAZ11 and TIFY3B/JAZ12. Interacts with RHD6 and RSL1. In terms of assembly, (Microbial infection) Interacts with the pathogenic Pseudomonas syringae HopZ1a protein. (Microbial infection) Acetylated by Pseudomonas syringae HopZ1a. In terms of processing, ubiquitinated. Targeted for degradation by the SCF(COI1) E3 ubiquitin ligase-proteasome pathway during jasmonate signaling. In terms of tissue distribution, expressed in cotyledons, hypocotyls, roots, sepals, petal vascular tissue and stigmas of developing flowers. Expressed in stamen filaments after jasmonic acid treatment.

The protein resides in the nucleus. Its function is as follows. Repressor of jasmonate responses. Jasmonoyl-isoleucine (JA-Ile) specifically promotes COI1-TIFY10B/JAZ2 interaction. Activated by MYC2, MYC3 and MYC4 transcription factors. Interacts with and suppresses RHD6 and RSL1 transcription factor activities to negatively regulate jasmonate-stimulated root hair development. This is Protein TIFY 10B from Arabidopsis thaliana (Mouse-ear cress).